The primary structure comprises 191 residues: Peptidyl-tRNA hydrolase (191 aa).

Position 17 (Tyr17) interacts with tRNA. His22 serves as the catalytic Proton acceptor. TRNA-binding residues include Tyr68, Asn70, and Asn116.

This sequence belongs to the PTH family. In terms of assembly, monomer.

It is found in the cytoplasm. The enzyme catalyses an N-acyl-L-alpha-aminoacyl-tRNA + H2O = an N-acyl-L-amino acid + a tRNA + H(+). Hydrolyzes ribosome-free peptidyl-tRNAs (with 1 or more amino acids incorporated), which drop off the ribosome during protein synthesis, or as a result of ribosome stalling. Functionally, catalyzes the release of premature peptidyl moieties from peptidyl-tRNA molecules trapped in stalled 50S ribosomal subunits, and thus maintains levels of free tRNAs and 50S ribosomes. This chain is Peptidyl-tRNA hydrolase, found in Mycolicibacterium smegmatis (strain ATCC 700084 / mc(2)155) (Mycobacterium smegmatis).